A 270-amino-acid polypeptide reads, in one-letter code: uncharacterized protein (270 aa).

The J domain occupies cysteine 43–histidine 112. The tract at residues glutamate 239–serine 270 is disordered. A compositionally biased stretch (polar residues) spans lysine 242–serine 251. Positions serine 252 to serine 270 are enriched in pro residues.

This is an uncharacterized protein from Schizosaccharomyces pombe (strain 972 / ATCC 24843) (Fission yeast).